A 183-amino-acid polypeptide reads, in one-letter code: Der GTPase-activating protein YihI (183 aa).

The tract at residues 1–101 (MSRSKKTRKG…KLTDEQKLLK (101 aa)) is disordered. Basic and acidic residues-rich tracts occupy residues 22 to 46 (KKQD…RHNE) and 92 to 101 (KLTDEQKLLK).

This sequence belongs to the YihI family. Interacts with Der.

A GTPase-activating protein (GAP) that modifies Der/EngA GTPase function. May play a role in ribosome biogenesis. This is Der GTPase-activating protein YihI from Shewanella oneidensis (strain ATCC 700550 / JCM 31522 / CIP 106686 / LMG 19005 / NCIMB 14063 / MR-1).